A 297-amino-acid polypeptide reads, in one-letter code: Ezy-1 protein (297 aa).

3 disordered regions span residues 1–34, 115–151, and 255–297; these read MAAV…GDGG, FTGK…SSSS, and QPAG…SPNM. Positions 123-135 are enriched in acidic residues; it reads AEGDDGEDEEEGE. Low complexity predominate over residues 136–150; it reads AQGVGKDAVDSSSSS. Positions 259–269 are enriched in basic and acidic residues; that stretch reads DGHEPEPKRPE.

The polypeptide is Ezy-1 protein (Ezy-1) (Chlamydomonas reinhardtii (Chlamydomonas smithii)).